Reading from the N-terminus, the 315-residue chain is Iron(3+)-hydroxamate-binding protein FhuD (315 aa).

An N-terminal signal peptide occupies residues 1–23; it reads MTHIYKKLGAAFFALLLIAALAA. A lipid anchor (N-palmitoyl cysteine) is attached at Cys24. Residue Cys24 is the site of S-diacylglycerol cysteine attachment. Residues 60 to 315 form the Fe/B12 periplasmic-binding domain; it reads RVVVMADGYY…LEFITESLTK (256 aa).

It belongs to the bacterial solute-binding protein 8 family. In terms of assembly, the complex is composed of an ATP-binding protein (FhuC), two transmembrane proteins (FhuB and FhuG) and a solute-binding protein (FhuD or YxeB).

It localises to the cell membrane. The protein resides in the membrane raft. Part of the ABC transporter complex FhuCBGD involved in iron(3+)-hydroxamate import. Binds the iron(3+)-hydroxamate complex and transfers it to the membrane-bound permease. Required for the transport of ferrichrome and coprogen. In Bacillus subtilis (strain 168), this protein is Iron(3+)-hydroxamate-binding protein FhuD (fhuD).